A 673-amino-acid polypeptide reads, in one-letter code: Xyloglucan glycosyltransferase 4 (673 aa).

Transmembrane regions (helical) follow at residues 90-110 and 144-164; these read FIKA…VAHF and IAPL…IQSL. The active site involves D238. Positions 297 and 299 each coordinate substrate. D391 is a catalytic residue. The next 2 helical transmembrane spans lie at 469–489 and 494–514; these read LILP…TMFI and LPLW…ILPS. Phosphoserine is present on S581. The next 2 membrane-spanning stretches (helical) occupy residues 623-643 and 648-668; these read VFKK…RSFL and LHFY…LDLI.

Belongs to the glycosyltransferase 2 family. Plant cellulose synthase-like C subfamily. As to quaternary structure, homodimer. Interacts with XXT5. Interacts with FUT1, MUR3 and XLT2. In terms of tissue distribution, expressed in seedlings, roots, leaves, stems, flowers and seeds.

It localises to the golgi apparatus membrane. Functionally, beta-1,4-glucan synthase rather involved in the synthesis of the xyloglucan backbone than cellulose. Seems to work simultaneously with xyloglucan 6-xylosyltransferase. Xyloglucan is a noncellulosic polysaccharides of plant cell wall and consists of a glucan backbone substituted by xylose, galactose and fucose. Associates with other xyloglucan-synthesizing enzymes to form multiprotein complexes for xyloglucan synthesis in the Golgi. In Arabidopsis thaliana (Mouse-ear cress), this protein is Xyloglucan glycosyltransferase 4.